The following is a 326-amino-acid chain: Protein FAM50 homolog (326 aa).

The interval 76 to 112 (EISNRDLQVARGASSSTSLAKDSQEAREKEEHVAKHT) is disordered. Positions 97 to 109 (DSQEAREKEEHVA) are enriched in basic and acidic residues.

It belongs to the FAM50 family.

This Caenorhabditis briggsae protein is Protein FAM50 homolog.